Reading from the N-terminus, the 24-residue chain is Brevinin-1Bf (24 aa).

A disulfide bridge connects residues C18 and C24.

In terms of tissue distribution, expressed by the skin glands.

It is found in the secreted. Functionally, antibacterial activity against Gram-positive bacterium S.aureus and Gram-negative bacterium E.coli. This is Brevinin-1Bf from Lithobates berlandieri (Rio Grande leopard frog).